A 3333-amino-acid chain; its full sequence is Laminin subunit alpha-3 (3333 aa).

A signal peptide spans 1–35 (MAAAARPRGRALGPVLPPTPLLLLVLRVLPACGAT). One can recognise a Laminin N-terminal domain in the interval 43–298 (AGLSLHPTYF…SIKDISIGGQ (256 aa)). Asn142 and Asn242 each carry an N-linked (GlcNAc...) asparagine glycan. The segment at 298-728 (QCVCNGHAEV…NNYYFPDLHH (431 aa)) is domain V. 29 cysteine pairs are disulfide-bonded: Cys299–Cys308, Cys301–Cys319, Cys321–Cys330, Cys333–Cys353, Cys356–Cys365, Cys358–Cys390, Cys393–Cys402, Cys405–Cys423, Cys426–Cys436, Cys428–Cys443, Cys445–Cys454, Cys457–Cys467, Cys491–Cys503, Cys493–Cys509, Cys511–Cys520, Cys523–Cys533, Cys536–Cys548, Cys538–Cys555, Cys557–Cys566, Cys569–Cys586, Cys601–Cys610, Cys613–Cys628, Cys631–Cys645, Cys633–Cys652, Cys654–Cys663, Cys666–Cys681, Cys684–Cys696, Cys686–Cys703, and Cys705–Cys714. Laminin EGF-like domains follow at residues 299–355 (CVCN…ECEA), 356–425 (CNCH…GCIP), 426–469 (CSCD…FCLR), 491–535 (CDCN…ICQA), 536–588 (CWCS…ACDP), 590–630 (GTIN…GCSE), 631–683 (CKCH…GCQG), and 684–728 (CQCD…DLHH). The tract at residues 796–1265 (TEAVSGHITI…VAFYHKGALP (470 aa)) is domain IV 1 (domain IV B). Cystine bridges form between Cys1266–Cys1278, Cys1268–Cys1285, Cys1287–Cys1296, Cys1299–Cys1309, Cys1312–Cys1319, Cys1314–Cys1326, Cys1328–Cys1337, Cys1340–Cys1353, Cys1356–Cys1371, Cys1358–Cys1378, Cys1380–Cys1389, Cys1392–Cys1402, Cys1405–Cys1417, Cys1407–Cys1424, Cys1426–Cys1435, and Cys1438–Cys1453. Laminin EGF-like domains follow at residues 1266–1311 (CECH…RCKP), 1312–1355 (CSCG…GCEG), 1356–1404 (CNCS…ECVP), and 1405–1455 (CNCN…GCTS). The domain III B stretch occupies residues 1266–1465 (CECHPTGATG…CFCFGVNNQC (200 aa)). Residues 1476 to 1653 (VDMLGWHLET…SGRIALAVEI (178 aa)) form the Laminin IV type A domain. Residues 1654–1821 (CACPPAYAGD…DSSPAEECDD (168 aa)) form a domain III A region. Cystine bridges form between Cys1687–Cys1696, Cys1689–Cys1703, Cys1706–Cys1715, Cys1718–Cys1731, Cys1734–Cys1746, Cys1736–Cys1755, Cys1757–Cys1766, and Cys1769–Cys1784. 2 consecutive Laminin EGF-like domains span residues 1687 to 1733 (CNCN…SCRA) and 1734 to 1786 (CPCP…SCQP). A Laminin EGF-like 15; truncated domain is found at 1787–1821 (CSCNSNGQLGSCHPLTGDCINQEPKDSSPAEECDD). Positions 1822–2389 (CDSCVMTLLN…ARDAASKVAV (568 aa)) are domain II and I. Coiled coils occupy residues 1852–1941 (ASAG…KNVI) and 1987–2169 (KHLR…DELV). The Cell attachment site motif lies at 2278-2280 (RGD). A coiled-coil region spans residues 2322 to 2388 (RTQNEDFKKA…QARDAASKVA (67 aa)). 3 N-linked (GlcNAc...) asparagine glycosylation sites follow: Asn2365, Asn2502, and Asn2584. Laminin G-like domains lie at 2390–2591 (PMRF…VEPC), 2598–2760 (SDKN…TKKC), 2767–2927 (VRSA…LGGC), 2986–3150 (ALQF…VSSC), and 3157–3330 (KGIY…LNGC). Intrachain disulfides connect Cys2561/Cys2591, Cys2737/Cys2760, Cys2895/Cys2927, Cys3127/Cys3150, and Cys3302/Cys3330.

In terms of assembly, laminin is a complex glycoprotein, consisting of three different polypeptide chains (alpha, beta, gamma), which are bound to each other by disulfide bonds into a cross-shaped molecule comprising one long and three short arms with globules at each end. Alpha-3 is a subunit of laminin-5 (laminin-332 or epiligrin/kalinin/nicein), laminin-6 (laminin-311 or K-laminin) and laminin-7 (laminin-321 or KS-laminin). In terms of tissue distribution, skin; respiratory, urinary, and digestive epithelia and in other specialized tissues with prominent secretory or protective functions. Epithelial basement membrane, and epithelial cell tongue that migrates into a wound bed. A differential and focal expression of the subunit alpha-3 is observed in the CNS.

The protein localises to the secreted. It localises to the extracellular space. The protein resides in the extracellular matrix. Its subcellular location is the basement membrane. Its function is as follows. Binding to cells via a high affinity receptor, laminin is thought to mediate the attachment, migration and organization of cells into tissues during embryonic development by interacting with other extracellular matrix components. Laminin-5 is thought to be involved in (1) cell adhesion via integrin alpha-3/beta-1 in focal adhesion and integrin alpha-6/beta-4 in hemidesmosomes, (2) signal transduction via tyrosine phosphorylation of pp125-FAK and p80, (3) differentiation of keratinocytes. The sequence is that of Laminin subunit alpha-3 (LAMA3) from Homo sapiens (Human).